A 63-amino-acid chain; its full sequence is Overexpressed in colon carcinoma 1 protein homolog (63 aa).

The segment covering 1-10 (MGCGNSTATS) has biased composition (polar residues). The disordered stretch occupies residues 1 to 37 (MGCGNSTATSAAAGRGKPGAVKDATEDSITEDDKRRN).

This sequence belongs to the OCC1 family.

The protein is Overexpressed in colon carcinoma 1 protein homolog of Rattus norvegicus (Rat).